Here is a 281-residue protein sequence, read N- to C-terminus: BURP domain-containing protein BNM2C (281 aa).

Residues 1 to 25 (MASLRFSVTFPALFSLLLSLWVVDA) form the signal peptide. The BURP domain maps to 59–281 (FFKISDLKLG…PLDNIVWVSK (223 aa)).

As to expression, expressed in the radicle of germinating seeds 2 days post-imbibition (DPI) and in roots of 30-DPI young plants. Expressed in the embryo and seed coat tissues of developing seeds. The protein accumulates only in seeds and only long after transcript accumulation becomes evident.

It is found in the protein storage vacuole. In Brassica napus (Rape), this protein is BURP domain-containing protein BNM2C.